Consider the following 283-residue polypeptide: MSETTQAAAIQAAAVAENERAPLKIALGIEYDGSQYYGWQRQIDVASVQACLEKALSKVADEPIEVLCAGRTDAGVHGTGQVVHFTTQAIRKDAAWTMGVNANLPPDIAVRWVKAVHEDFHARFSATARRYRYIIYNHRYRPAVLSHGMTHFYHPLDVERMERAGQCLLGENDFTSFRAVQCQSRTPWRNVNHLKVTRHGNYIVVDIKANAFVHHMVRNIVGSLMDVGCGNRPESWIAELLAAKDRTLAGATARAEGLYLVAVDYPARFALPQPTMGPLFLAD.

Aspartate 73 acts as the Nucleophile in catalysis. The tract at residues phenylalanine 120–phenylalanine 124 is RNA binding. Tyrosine 131 contributes to the substrate binding site. The interval glutamine 181–arginine 185 is interaction with tRNA.

This sequence belongs to the tRNA pseudouridine synthase TruA family. As to quaternary structure, homodimer.

The enzyme catalyses uridine(38/39/40) in tRNA = pseudouridine(38/39/40) in tRNA. Formation of pseudouridine at positions 38, 39 and 40 in the anticodon stem and loop of transfer RNAs. The polypeptide is tRNA pseudouridine synthase A (Pectobacterium atrosepticum (strain SCRI 1043 / ATCC BAA-672) (Erwinia carotovora subsp. atroseptica)).